The primary structure comprises 577 residues: Cytidine monophosphate-N-acetylneuraminic acid hydroxylase (577 aa).

The propeptide occupies 1 to 4; it reads MMDR. A Rieske domain is found at 14–112; that stretch reads LSPAEVANLK…IEMDENNGLS (99 aa). Residues cysteine 54, histidine 56, cysteine 75, and histidine 78 each coordinate [2Fe-2S] cluster.

This sequence belongs to the CMP-Neu5Ac hydroxylase family. Requires [2Fe-2S] cluster as cofactor. In terms of tissue distribution, expressed in all tissues tested, except in brain.

It is found in the cytoplasm. Its subcellular location is the endoplasmic reticulum. The catalysed reaction is CMP-N-acetyl-beta-neuraminate + 2 Fe(II)-[cytochrome b5] + O2 + 2 H(+) = CMP-N-glycoloyl-beta-neuraminate + 2 Fe(III)-[cytochrome b5] + H2O. It participates in amino-sugar metabolism; N-acetylneuraminate metabolism. Its function is as follows. Sialic acids are components of carbohydrate chains of glycoconjugates and are involved in cell-cell recognition and cell-pathogen interactions. Catalyzes the conversion of CMP-N-acetylneuraminic acid (CMP-Neu5Ac) into its hydroxylated derivative CMP-N-glycolylneuraminic acid (CMP-Neu5Gc), a sialic acid abundantly expressed at the surface of many cells. The chain is Cytidine monophosphate-N-acetylneuraminic acid hydroxylase (Cmah) from Mus musculus (Mouse).